The following is a 264-amino-acid chain: Tritrans,polycis-undecaprenyl-diphosphate synthase (geranylgeranyl-diphosphate specific) (264 aa).

Asp-43 is a catalytic residue. Asp-43 serves as a coordination point for Mg(2+). Residues 44–47 (GNRR), Trp-48, His-60, and 88–90 (STE) contribute to the substrate site. Catalysis depends on Asn-91, which acts as the Proton acceptor. Residues Phe-92, Arg-94, Arg-213, and 219-221 (RIS) contribute to the substrate site. Position 232 (Glu-232) interacts with Mg(2+).

Belongs to the UPP synthase family. In terms of assembly, homodimer. The cofactor is Mg(2+).

It carries out the reaction geranylgeranyl diphosphate + 7 isopentenyl diphosphate = tri-trans,hepta-cis-undecaprenyl diphosphate + 7 diphosphate. In terms of biological role, catalyzes the sequential condensation of isopentenyl diphosphate (IPP) with geranylgeranyl diphosphate (GGPP) to yield (2Z,6Z,10Z,14Z,18Z,22Z,26Z,30E,34E,38E)-undecaprenyl diphosphate (tritrans,heptacis-UPP). It is probably the precursor of glycosyl carrier lipids. The sequence is that of Tritrans,polycis-undecaprenyl-diphosphate synthase (geranylgeranyl-diphosphate specific) from Pyrococcus furiosus (strain ATCC 43587 / DSM 3638 / JCM 8422 / Vc1).